The chain runs to 261 residues: Type III pantothenate kinase (261 aa).

6–13 (DAGNSNIT) lines the ATP pocket. Substrate is bound by residues tyrosine 100 and 107–110 (GADR). Catalysis depends on aspartate 109, which acts as the Proton acceptor. Aspartate 129 lines the K(+) pocket. Threonine 132 is an ATP binding site. Residue threonine 184 coordinates substrate.

Belongs to the type III pantothenate kinase family. As to quaternary structure, homodimer. NH4(+) is required as a cofactor. The cofactor is K(+).

Its subcellular location is the cytoplasm. The enzyme catalyses (R)-pantothenate + ATP = (R)-4'-phosphopantothenate + ADP + H(+). Its pathway is cofactor biosynthesis; coenzyme A biosynthesis; CoA from (R)-pantothenate: step 1/5. In terms of biological role, catalyzes the phosphorylation of pantothenate (Pan), the first step in CoA biosynthesis. The chain is Type III pantothenate kinase from Solibacter usitatus (strain Ellin6076).